Reading from the N-terminus, the 543-residue chain is Glutamyl-tRNA(Gln) amidotransferase subunit A, chloroplastic/mitochondrial (543 aa).

Catalysis depends on charge relay system residues lysine 121 and serine 196. Catalysis depends on serine 220, which acts as the Acyl-ester intermediate.

It belongs to the amidase family. GatA subfamily. As to quaternary structure, subunit of the heterotrimeric GatCAB amidotransferase (AdT) complex, composed of A, B and C subunits.

Its subcellular location is the mitochondrion. The protein localises to the plastid. It localises to the chloroplast stroma. It catalyses the reaction L-glutamyl-tRNA(Gln) + L-glutamine + ATP + H2O = L-glutaminyl-tRNA(Gln) + L-glutamate + ADP + phosphate + H(+). In terms of biological role, allows the formation of correctly charged Gln-tRNA(Gln) through the transamidation of misacylated Glu-tRNA(Gln) in chloroplasts and mitochondria. The reaction takes place in the presence of glutamine and ATP through an activated gamma-phospho-Glu-tRNA(Gln). The protein is Glutamyl-tRNA(Gln) amidotransferase subunit A, chloroplastic/mitochondrial of Zea mays (Maize).